The primary structure comprises 126 residues: Large-conductance mechanosensitive channel (126 aa).

2 helical membrane passes run 14 to 34 (VIDL…VKSL) and 67 to 87 (GSFL…FILV).

It belongs to the MscL family. In terms of assembly, homopentamer.

Its subcellular location is the cell membrane. Its function is as follows. Channel that opens in response to stretch forces in the membrane lipid bilayer. May participate in the regulation of osmotic pressure changes within the cell. The polypeptide is Large-conductance mechanosensitive channel (Lactiplantibacillus plantarum (strain ATCC BAA-793 / NCIMB 8826 / WCFS1) (Lactobacillus plantarum)).